A 74-amino-acid chain; its full sequence is NADH dehydrogenase [ubiquinone] 1 alpha subcomplex assembly factor 8 (74 aa).

The 48-residue stretch at Leu-22–Thr-69 folds into the CHCH domain. 2 short sequence motifs (cx9C motif) span residues Cys-25 to Cys-35 and Cys-51 to Cys-61. Disulfide bonds link Cys-25–Cys-61 and Cys-35–Cys-51.

In terms of assembly, interacts with NDUFAF5.

The protein resides in the mitochondrion. Involved in the assembly of mitochondrial NADH:ubiquinone oxidoreductase complex (complex I, MT-ND1). Required to stabilize NDUFAF5. The sequence is that of NADH dehydrogenase [ubiquinone] 1 alpha subcomplex assembly factor 8 from Mus musculus (Mouse).